Consider the following 116-residue polypeptide: Large ribosomal subunit protein bL19 (116 aa).

This sequence belongs to the bacterial ribosomal protein bL19 family.

Functionally, this protein is located at the 30S-50S ribosomal subunit interface and may play a role in the structure and function of the aminoacyl-tRNA binding site. This Flavobacterium psychrophilum (strain ATCC 49511 / DSM 21280 / CIP 103535 / JIP02/86) protein is Large ribosomal subunit protein bL19.